The chain runs to 63 residues: Large ribosomal subunit protein uL29 (63 aa).

Belongs to the universal ribosomal protein uL29 family.

The protein is Large ribosomal subunit protein uL29 of Aliarcobacter butzleri (strain RM4018) (Arcobacter butzleri).